The sequence spans 144 residues: Putative lipoprotein MAH_0816 (144 aa).

The N-terminal stretch at 1–24 (MRWPMQNRTTAVIAVALATTALVA) is a signal peptide. Cys-25 carries N-palmitoyl cysteine lipidation. Cys-25 is lipidated: S-diacylglycerol cysteine.

It belongs to the mycobacterial 19 kDa antigen family.

The protein localises to the cell membrane. This is Putative lipoprotein MAH_0816 from Mycobacterium avium subsp. hominissuis (strain TH135).